Here is a 78-residue protein sequence, read N- to C-terminus: uncharacterized protein (78 aa).

This is an uncharacterized protein from Enterobacteria phage RB51 (Bacteriophage RB51).